A 428-amino-acid polypeptide reads, in one-letter code: Trigger factor (428 aa).

The 86-residue stretch at G163–P248 folds into the PPIase FKBP-type domain.

It belongs to the FKBP-type PPIase family. Tig subfamily.

The protein resides in the cytoplasm. It carries out the reaction [protein]-peptidylproline (omega=180) = [protein]-peptidylproline (omega=0). In terms of biological role, involved in protein export. Acts as a chaperone by maintaining the newly synthesized protein in an open conformation. Functions as a peptidyl-prolyl cis-trans isomerase. The sequence is that of Trigger factor from Alkaliphilus metalliredigens (strain QYMF).